The following is a 251-amino-acid chain: Phosphosulfolactate synthase (251 aa).

The protein belongs to the phosphosulfolactate synthase family. As to quaternary structure, homotrimer. It depends on Mg(2+) as a cofactor.

It catalyses the reaction (2R)-O-phospho-3-sulfolactate = phosphoenolpyruvate + sulfite + H(+). The protein operates within cofactor biosynthesis; coenzyme M biosynthesis; sulfoacetaldehyde from phosphoenolpyruvate and sulfite: step 1/4. Functionally, catalyzes the addition of sulfite to phosphoenolpyruvate (PEP) to yield (2R)-phospho-3-sulfolactate (PSL). The chain is Phosphosulfolactate synthase (comA) from Methanocaldococcus jannaschii (strain ATCC 43067 / DSM 2661 / JAL-1 / JCM 10045 / NBRC 100440) (Methanococcus jannaschii).